The following is a 154-amino-acid chain: Superoxide dismutase [Cu-Zn] (154 aa).

Cu cation is bound by residues H47, H49, and H64. Residues C58 and C147 are joined by a disulfide bond. H64, H72, H81, and D84 together coordinate Zn(2+). H121 contributes to the Cu cation binding site. The segment covering 125–137 (DDLGRGGNEESKK) has biased composition (basic and acidic residues). Residues 125-147 (DDLGRGGNEESKKTGNAGPRPAC) form a disordered region. R144 lines the substrate pocket.

As to quaternary structure, homodimer. Cu cation serves as cofactor. Zn(2+) is required as a cofactor.

It localises to the cytoplasm. The enzyme catalyses 2 superoxide + 2 H(+) = H2O2 + O2. In terms of biological role, destroys radicals which are normally produced within the cells and which are toxic to biological systems. The protein is Superoxide dismutase [Cu-Zn] of Aspergillus niger.